A 238-amino-acid chain; its full sequence is 6-phosphogluconolactonase (238 aa).

It belongs to the glucosamine/galactosamine-6-phosphate isomerase family. 6-phosphogluconolactonase subfamily.

It catalyses the reaction 6-phospho-D-glucono-1,5-lactone + H2O = 6-phospho-D-gluconate + H(+). Its pathway is carbohydrate degradation; pentose phosphate pathway; D-ribulose 5-phosphate from D-glucose 6-phosphate (oxidative stage): step 2/3. Functionally, hydrolysis of 6-phosphogluconolactone to 6-phosphogluconate. This is 6-phosphogluconolactonase (pgl) from Mesorhizobium japonicum (strain LMG 29417 / CECT 9101 / MAFF 303099) (Mesorhizobium loti (strain MAFF 303099)).